A 376-amino-acid polypeptide reads, in one-letter code: Succinyl-diaminopimelate desuccinylase (376 aa).

Histidine 66 provides a ligand contact to Zn(2+). Aspartate 68 is an active-site residue. Aspartate 99 lines the Zn(2+) pocket. Glutamate 133 functions as the Proton acceptor in the catalytic mechanism. The Zn(2+) site is built by glutamate 134, glutamate 162, and histidine 349.

It belongs to the peptidase M20A family. DapE subfamily. As to quaternary structure, homodimer. Zn(2+) is required as a cofactor. Requires Co(2+) as cofactor.

It catalyses the reaction N-succinyl-(2S,6S)-2,6-diaminopimelate + H2O = (2S,6S)-2,6-diaminopimelate + succinate. Its pathway is amino-acid biosynthesis; L-lysine biosynthesis via DAP pathway; LL-2,6-diaminopimelate from (S)-tetrahydrodipicolinate (succinylase route): step 3/3. Its function is as follows. Catalyzes the hydrolysis of N-succinyl-L,L-diaminopimelic acid (SDAP), forming succinate and LL-2,6-diaminopimelate (DAP), an intermediate involved in the bacterial biosynthesis of lysine and meso-diaminopimelic acid, an essential component of bacterial cell walls. The sequence is that of Succinyl-diaminopimelate desuccinylase from Ruthia magnifica subsp. Calyptogena magnifica.